A 113-amino-acid polypeptide reads, in one-letter code: Hydrogenase maturation factor HypA (113 aa).

His2 is a Ni(2+) binding site. Zn(2+) is bound by residues Cys73, Cys76, Cys89, and Cys92.

The protein belongs to the HypA/HybF family.

Its function is as follows. Involved in the maturation of [NiFe] hydrogenases. Required for nickel insertion into the metal center of the hydrogenase. In Azorhizobium caulinodans (strain ATCC 43989 / DSM 5975 / JCM 20966 / LMG 6465 / NBRC 14845 / NCIMB 13405 / ORS 571), this protein is Hydrogenase maturation factor HypA.